The chain runs to 78 residues: Small ribosomal subunit protein bS18 (78 aa).

The protein belongs to the bacterial ribosomal protein bS18 family. As to quaternary structure, part of the 30S ribosomal subunit. Forms a tight heterodimer with protein bS6.

In terms of biological role, binds as a heterodimer with protein bS6 to the central domain of the 16S rRNA, where it helps stabilize the platform of the 30S subunit. This is Small ribosomal subunit protein bS18 from Alkaliphilus oremlandii (strain OhILAs) (Clostridium oremlandii (strain OhILAs)).